A 1481-amino-acid polypeptide reads, in one-letter code: ABC multidrug transporter atrH (1481 aa).

A compositionally biased stretch (basic and acidic residues) spans 1 to 10 (MALPREERSL). Disordered stretches follow at residues 1-45 (MALP…GIEQ) and 61-89 (ISQT…SDQF). N-linked (GlcNAc...) asparagine glycosylation is found at Asn-19, Asn-76, and Asn-320. Residues 134 to 396 (ATVSNVWLKA…FIEMGFDCPE (263 aa)) form the ABC transporter 1 domain. A helical transmembrane segment spans residues 507 to 527 (MTLSTVIGNSILALIISSVFY). Asn-530 is a glycosylation site (N-linked (GlcNAc...) asparagine). 5 helical membrane-spanning segments follow: residues 542 to 562 (LLFF…LTLW), 587 to 607 (LIVD…ILYF), 616 to 636 (GHFF…SNVF), 650 to 670 (EVPA…TIPV), and 758 to 778 (FGIL…ASEL). An ABC transporter 2 domain is found at 838–1081 (FHWQDVCYDI…LIKYFEDKGS (244 aa)). 874–881 (GVTGAGKT) is an ATP binding site. A run of 6 helical transmembrane segments spans residues 1174 to 1194 (YIYA…FTFW), 1210 to 1230 (IFML…YFAM), 1249 to 1269 (AFML…AVPA), 1298 to 1318 (LLVL…IAGI), 1327 to 1347 (IAQL…SPDV), and 1358 to 1378 (ASPF…GAPV). N-linked (GlcNAc...) asparagine glycosylation is present at Asn-1395. Residues 1446–1466 (VGILFVYIVFNTVAAVFLYWL) traverse the membrane as a helical segment.

It belongs to the ABC transporter superfamily. ABCG family. PDR (TC 3.A.1.205) subfamily.

It localises to the cell membrane. Functionally, pleiotropic ABC efflux transporter involved in the basal level of azole susceptibility. The sequence is that of ABC multidrug transporter atrH from Aspergillus oryzae (strain ATCC 42149 / RIB 40) (Yellow koji mold).